Here is a 1069-residue protein sequence, read N- to C-terminus: Protogenin B (1069 aa).

The signal sequence occupies residues 1–26 (MGSVRWKTHQQWLIIFWILSFSGVFG). At 27 to 936 (FSELWFSIEP…LYHIDEKSMS (910 aa)) the chain is on the extracellular side. Ig-like domains follow at residues 30 to 117 (LWFS…ARLT), 122 to 208 (LVFS…AELV), 221 to 308 (PLII…GNVT), and 312 to 396 (PSLV…SRLI). 2 disulfide bridges follow: cysteine 51-cysteine 100 and cysteine 143-cysteine 191. Asparagine 81, asparagine 88, asparagine 180, and asparagine 229 each carry an N-linked (GlcNAc...) asparagine glycan. A disulfide bond links cysteine 242 and cysteine 290. N-linked (GlcNAc...) asparagine glycosylation is found at asparagine 299 and asparagine 306. The disordered stretch occupies residues 317–336 (KPESQTRPRAGTARFSCQAE). A disulfide bridge links cysteine 333 with cysteine 380. 5 Fibronectin type-III domains span residues 406–500 (APRN…TLED), 502–601 (PLRT…TPKT), 608–701 (PAPN…CPST), 711–804 (PPDH…TLLE), and 809–904 (PPES…VKGK). Residues asparagine 458, asparagine 473, and asparagine 560 are each glycosylated (N-linked (GlcNAc...) asparagine). Over residues 590–605 (PSAWSSHRTPKTSSAT) the composition is skewed to polar residues. Residues 590-609 (PSAWSSHRTPKTSSATVPPA) form a disordered region. Residues asparagine 618, asparagine 720, and asparagine 834 are each glycosylated (N-linked (GlcNAc...) asparagine). A helical membrane pass occupies residues 937 to 957 (GIIVGVCIALSCIILCIFILL). The Cytoplasmic portion of the chain corresponds to 958–1069 (SKTQTQKSAS…KTVLCYEDEA (112 aa)).

It belongs to the immunoglobulin superfamily. DCC family. Initially expressed in the ventral forebrain and ventral spinal cord. Later, also expressed in the midbrain and in parts of the diencephalon and hindbrain.

It localises to the membrane. In terms of biological role, may play a role in anteroposterior axis elongation. The protein is Protogenin B of Danio rerio (Zebrafish).